Here is a 70-residue protein sequence, read N- to C-terminus: DNA-directed RNA polymerase subunit omega (70 aa).

It belongs to the RNA polymerase subunit omega family. In terms of assembly, the RNAP catalytic core consists of 2 alpha, 1 beta, 1 beta' and 1 omega subunit. When a sigma factor is associated with the core the holoenzyme is formed, which can initiate transcription.

It catalyses the reaction RNA(n) + a ribonucleoside 5'-triphosphate = RNA(n+1) + diphosphate. Promotes RNA polymerase assembly. Latches the N- and C-terminal regions of the beta' subunit thereby facilitating its interaction with the beta and alpha subunits. The polypeptide is DNA-directed RNA polymerase subunit omega (Bacillus cereus (strain B4264)).